The sequence spans 199 residues: Probable chemoreceptor glutamine deamidase CheD (199 aa).

It belongs to the CheD family.

The enzyme catalyses L-glutaminyl-[protein] + H2O = L-glutamyl-[protein] + NH4(+). In terms of biological role, probably deamidates glutamine residues to glutamate on methyl-accepting chemotaxis receptors (MCPs), playing an important role in chemotaxis. The sequence is that of Probable chemoreceptor glutamine deamidase CheD from Cereibacter sphaeroides (strain ATCC 17025 / ATH 2.4.3) (Rhodobacter sphaeroides).